The primary structure comprises 231 residues: tRNA (guanine-N(7)-)-methyltransferase (231 aa).

S-adenosyl-L-methionine is bound by residues Asp57, Glu82, Asp109, and Asp132. Residue Asp132 is part of the active site. Residues Lys136, Asp168, and 205 to 208 each bind substrate; that span reads TKFE. Residues 194-214 form a disordered region; it reads AFVPPPPPRPQTKFERRGLRK.

This sequence belongs to the class I-like SAM-binding methyltransferase superfamily. TrmB family.

The enzyme catalyses guanosine(46) in tRNA + S-adenosyl-L-methionine = N(7)-methylguanosine(46) in tRNA + S-adenosyl-L-homocysteine. It participates in tRNA modification; N(7)-methylguanine-tRNA biosynthesis. In terms of biological role, catalyzes the formation of N(7)-methylguanine at position 46 (m7G46) in tRNA. This Halorhodospira halophila (strain DSM 244 / SL1) (Ectothiorhodospira halophila (strain DSM 244 / SL1)) protein is tRNA (guanine-N(7)-)-methyltransferase.